Here is a 326-residue protein sequence, read N- to C-terminus: F-box/LRR-repeat protein 12 (326 aa).

The region spanning 1–47 is the F-box domain; that stretch reads MATLVELPDSVLLEIFSYLPVRDRIRISRVCHRWKRLVDDRWLWRHV. LRR repeat units lie at residues 51–78, 86–111, 113–133, 161–185, 186–211, 212–236, 237–261, and 266–291; these read LYTM…RMGG, APQL…CLHV, DLSM…ELHS, VPAF…VLGG, TYRV…EVLG, CTLS…IRLT, VRGL…CLQG, and PEMP…ELQG.

In terms of assembly, interacts with SKP1 and CUL1.

Its pathway is protein modification; protein ubiquitination. In terms of biological role, substrate-recognition component of the SCF (SKP1-CUL1-F-box protein)-type E3 ubiquitin ligase complex. Mediates the polyubiquitination and proteasomal degradation of CAMK1 leading to disruption of cyclin D1/CDK4 complex assembly which results in G1 cell cycle arrest in lung epithelia. The polypeptide is F-box/LRR-repeat protein 12 (FBXL12) (Homo sapiens (Human)).